Reading from the N-terminus, the 82-residue chain is MRIMARIGVENSLTDVQQALKQQGHEVVTLNSEQDAQGCDCCVVTGQDSNMMGIADASIKGSVITAHGLTTDDICQQVESRT.

This sequence belongs to the UPF0180 family.

The polypeptide is UPF0180 protein BALH_1248 (Bacillus thuringiensis (strain Al Hakam)).